A 1407-amino-acid polypeptide reads, in one-letter code: E3 ubiquitin-protein ligase linker protein MMS1 (1407 aa).

Residues 1–600 (MLGLRTHGLD…QFQIFRHLRI (600 aa)) are required for interaction with MMS22. T1294 carries the post-translational modification Phosphothreonine.

Component of multiple cullin-RING ligases (CRLs) composed of 4 subunits: the RING protein HRT1, the cullin RTT101, a linker protein MMS1, and one of many alternative substrate receptors belonging to a protein family described as DCAF (DDB1- and CUL4-associated factor). Component of a RTT101(MMS1-MMS22) complex with the substrate receptor MMS22. This complex further interacts with RTT107 and CTF4 to form RTT101-MMS1-MMS22-RTT107 and RTT101-MMS1-MMS22-CTF4 complexes respectively. Component of a RTT101(MSS1-CRT10) complex with the substrate receptor CRT10. Component of a RTT101(MSS1-ESC2) complex with the potential substrate receptor ESC2. Component of a RTT101(MSS1-ORC5) complex with the potential substrate receptor ORC5. Interacts with RTT101 (via N-ter). Interacts (via N-ter) with MMS22 (via C-ter). Interacts with CRT10.

It is found in the nucleus. In terms of biological role, component of multiple cullin-RING-based E3 ubiquitin-protein ligase complexes (CRLs), which mediate the ubiquitination of target proteins. The CRL associates with CDC34 as the E2 ubiquitin-conjugating enzyme. The functional specificity of the CRL depends on the type of the associated substrate receptor protein. RTT101(MMS1-MMS22) promotes fork progression through damaged DNA or natural pause sites by stabilizing replication proteins like the replication fork-pausing complex (FPC) and leading-strand polymerase at stalled replication forks. RTT101(MMS1-MMS22) ubiquitinates the acetylated histones H3K56ac-H4 at lysine residues H3K121, H3K122 and H3K125. Ubiquitination is required for efficient histone deposition during replication-coupled nucleosome assembly, probably by facilitating the transfer of H3-H4 from ASF1 to other chaperones involved in histone deposition. RTT101(MMS1-CRT10) may regulate nucleotide synthesis through transcriptional regulation of ribonucleotide reductase. RTT101(MMS1) is also involved in the non-functional rRNA decay (NRD) of 25S rRNA through the selective, ubiquitination-dependent degradation of nonfunctional ribosomal particles. Involved in the regulation of TY1 transposition. The sequence is that of E3 ubiquitin-protein ligase linker protein MMS1 (MMS1) from Saccharomyces cerevisiae (strain ATCC 204508 / S288c) (Baker's yeast).